The chain runs to 179 residues: uncharacterized protein (179 aa).

Over residues 1–14 (MTKKVKLDQDEINN) the composition is skewed to basic and acidic residues. Disordered stretches follow at residues 1–90 (MTKK…NNFC) and 121–147 (HKKS…DKKV). 2 stretches are compositionally biased toward low complexity: residues 15–90 (KNKN…NNFC) and 126–137 (RSQSQSSLNSFD). The span at 138–147 (QDNKSKDKKV) shows a compositional bias: basic and acidic residues.

This is an uncharacterized protein from Dictyostelium discoideum (Social amoeba).